A 328-amino-acid chain; its full sequence is UDP-N-acetylglucosamine transporter YEA4 (328 aa).

10 consecutive transmembrane segments (helical) span residues 1–21 (MSFV…VISF), 30–50 (INLG…IQLP), 66–86 (HIPL…SVAN), 98–118 (IHII…WAVC), 122–142 (YSKL…VASL), 166–186 (SMFG…LSLL), 198–218 (WKET…LGYT), 241–261 (LPIA…FICI), 274–294 (LTLS…SVYI), and 298–318 (VLSV…GLYS).

It belongs to the nucleotide-sugar transporter family. SLC35A subfamily.

It localises to the golgi apparatus membrane. In terms of biological role, sugar transporter that specifically mediates the transport of UDP-N-acetylglucosamine (UDP-GlcNAc) from the cytosol into Golgi vesicles where glycosyltransferases function. In Kluyveromyces lactis (strain ATCC 8585 / CBS 2359 / DSM 70799 / NBRC 1267 / NRRL Y-1140 / WM37) (Yeast), this protein is UDP-N-acetylglucosamine transporter YEA4 (YEA4).